A 353-amino-acid polypeptide reads, in one-letter code: MVLVATLFSLFTVSLCRSIPRSSPSSSPYTQATDLKIHDPTVINANGAYYAYGVGEHIVIHQAPGLAGPWKQIGSVLDKDSIIPKGDRAKPWAPTTIEVKGTFYCYYSVSNAGCRDSAIGVATSQSPGPGGWTDHGAIVQSGTGQGSDEHPFNEVNAIDPAVLVTGDKGHLVFGSYWSGIWQVPLNEDFSSVGNTTGLNAHHLAKHPKTERVNSQDQNPDPLCRDSSGRRPVEGAYISYHAPYYYLWLSWGQCCDYDPNNLPPSGEEYSIRVGRSESPHGPFVDKQGKELTQGGGELIYGSNNDVYAPGGQGVITVETGDILYYHYSLYRYSTHSLYTFANLDFNQGCTLFIQ.

The N-terminal stretch at 1 to 16 is a signal peptide; sequence MVLVATLFSLFTVSLC. The Proton acceptor role is filled by Asp-39. Asn-194 is a glycosylation site (N-linked (GlcNAc...) asparagine). The tract at residues 202–227 is disordered; that stretch reads HLAKHPKTERVNSQDQNPDPLCRDSS. Glu-233 serves as the catalytic Proton donor.

Belongs to the glycosyl hydrolase 43 family.

It is found in the secreted. The enzyme catalyses Endohydrolysis of (1-&gt;5)-alpha-arabinofuranosidic linkages in (1-&gt;5)-arabinans.. It functions in the pathway glycan metabolism; L-arabinan degradation. Endo-1,5-alpha-L-arabinanase involved in degradation of pectin. Its preferred substrate is linear 1,5-alpha-L-arabinan. This Aspergillus oryzae (strain ATCC 42149 / RIB 40) (Yellow koji mold) protein is Probable arabinan endo-1,5-alpha-L-arabinosidase B (abnB).